Here is a 122-residue protein sequence, read N- to C-terminus: MIQTQSMLDVADNSGARRVMCIKVLGGSHRRYAGIGDIIKVTVKEAIPRGKVKKGQVMTAVVVRTRHGVRRPDGSIIRFDGNAAVLLNNKQEPIGTRIFGPVTRELRTEKFMKIVSLAPEVL.

It belongs to the universal ribosomal protein uL14 family. As to quaternary structure, part of the 50S ribosomal subunit. Forms a cluster with proteins L3 and L19. In the 70S ribosome, L14 and L19 interact and together make contacts with the 16S rRNA in bridges B5 and B8.

Its function is as follows. Binds to 23S rRNA. Forms part of two intersubunit bridges in the 70S ribosome. The protein is Large ribosomal subunit protein uL14 of Stutzerimonas stutzeri (strain A1501) (Pseudomonas stutzeri).